The chain runs to 201 residues: Ubiquinone biosynthesis accessory factor UbiJ (201 aa).

Residues 15-112 enclose the SCP2 domain; sequence LNTFLYRSPA…QVVQNFVALA (98 aa).

This sequence belongs to the UbiJ family.

The protein resides in the cytoplasm. It participates in cofactor biosynthesis; ubiquinone biosynthesis. Its function is as follows. Required for ubiquinone (coenzyme Q) biosynthesis under aerobic conditions. Binds hydrophobic ubiquinone biosynthetic intermediates via its SCP2 domain and is essential for the stability of the Ubi complex. May constitute a docking platform where Ubi enzymes assemble and access their SCP2-bound polyprenyl substrates. Required for intracellular proliferation in macrophages. The polypeptide is Ubiquinone biosynthesis accessory factor UbiJ (Salmonella typhimurium (strain LT2 / SGSC1412 / ATCC 700720)).